The sequence spans 208 residues: Small ribosomal subunit protein uS5 (208 aa).

A compositionally biased stretch (polar residues) spans 1-19; that stretch reads MTDSNNQSPNKKTSGSSGA. The interval 1–54 is disordered; it reads MTDSNNQSPNKKTSGSSGAPTAADGRQENRRSRGEKRGGRRDRRGQERDSEWQE. 2 stretches are compositionally biased toward basic and acidic residues: residues 25–37 and 44–54; these read GRQE…GEKR and RGQERDSEWQE. One can recognise an S5 DRBM domain in the interval 52 to 115; it reads WQERVVQIRR…ADGKKHLVRV (64 aa).

Belongs to the universal ribosomal protein uS5 family. As to quaternary structure, part of the 30S ribosomal subunit. Contacts proteins S4 and S8.

Its function is as follows. With S4 and S12 plays an important role in translational accuracy. In terms of biological role, located at the back of the 30S subunit body where it stabilizes the conformation of the head with respect to the body. The sequence is that of Small ribosomal subunit protein uS5 from Prochlorococcus marinus (strain NATL1A).